Consider the following 662-residue polypeptide: Transketolase (662 aa).

His-28 is a binding site for substrate. Thiamine diphosphate contacts are provided by residues His-68 and 115-117 (GPL). Mg(2+) is bound at residue Asp-156. Positions 157 and 186 each coordinate thiamine diphosphate. Residues Asn-186 and Ile-188 each coordinate Mg(2+). Substrate-binding residues include His-261, Arg-356, and Ser-383. His-261 is a thiamine diphosphate binding site. Glu-410 serves as the catalytic Proton donor. Residue Phe-436 coordinates thiamine diphosphate. Positions 460, 468, and 519 each coordinate substrate.

Belongs to the transketolase family. In terms of assembly, homodimer. Mg(2+) is required as a cofactor. It depends on Ca(2+) as a cofactor. Mn(2+) serves as cofactor. The cofactor is Co(2+). Requires thiamine diphosphate as cofactor.

It catalyses the reaction D-sedoheptulose 7-phosphate + D-glyceraldehyde 3-phosphate = aldehydo-D-ribose 5-phosphate + D-xylulose 5-phosphate. The protein operates within carbohydrate biosynthesis; Calvin cycle. It functions in the pathway carbohydrate degradation; pentose phosphate pathway. Its function is as follows. Catalyzes the transfer of a two-carbon ketol group from a ketose donor to an aldose acceptor, via a covalent intermediate with the cofactor thiamine pyrophosphate. In Staphylococcus aureus (strain MRSA252), this protein is Transketolase (tkt).